Here is a 4691-residue protein sequence, read N- to C-terminus: Plectin (4691 aa).

The tract at residues 1–1478 (MVAGMLMPLD…SELTTLTSQY (1478 aa)) is globular 1. Arg21 bears the Phosphoserine mark. The residue at position 26 (Val26) is a Phosphotyrosine. 2 disordered regions span residues 113-161 (RSPH…TPVV) and 167-186 (GTLA…RDRV). Residues 137–154 (DPAREERQVYRRKEREEG) are compositionally biased toward basic and acidic residues. Residues 181–411 (DERDRVQKKT…YVSSLYDAMP (231 aa)) form an actin-binding region. 2 Calponin-homology (CH) domains span residues 185-293 (RVQK…LHFQ) and 306-411 (MTAK…DAMP). Residues 653 to 727 (LQSTQRRPEL…ERARNDESQL (75 aa)) form a Spectrin 1 repeat. Ser728 carries the phosphoserine modification. Spectrin repeat units follow at residues 748 to 832 (KLLN…REDH) and 845 to 938 (LQTQ…AIVQ). Thr823 carries the post-translational modification Phosphothreonine. In terms of domain architecture, SH3 spans 949–1006 (RGHVPLIAVCDYKQVEVTVHKGDQCQLVGPAQPSHWKVLSGSSSEAAVPSVCFLVPPP). The interval 963 to 4572 (VEVTVHKGDQ…ARTAQKLRDV (3610 aa)) is required for interaction with intermediate filament proteins. Ser1055 bears the Phosphoserine mark. A Spectrin 4 repeat occupies 1323–1423 (RERVTQLLER…QKFAKQYINA (101 aa)). Ser1443 is modified (phosphoserine). Coiled coils occupy residues 1477–1697 (QYIK…ERRL) and 1729–2764 (SFAE…TTQA). The interval 1479–2762 (IKFISETLRR…ALAHSEIATT (1284 aa)) is central fibrous rod domain. The segment at 1626 to 1653 (RAEEAEAQKRQAQEEAERLRRQVQDESQ) is disordered. Ser1729 bears the Phosphoserine mark. Lys1733 carries the post-translational modification N6-acetyllysine. 3 disordered regions span residues 1801–1835 (SLAQ…RELA), 2100–2141 (AEDT…SLAA), and 2223–2317 (RLRS…KHKK). Basic and acidic residues-rich tracts occupy residues 1806–1835 (DAEK…RELA), 2100–2116 (AEDT…EAAR), 2124–2136 (EEQR…ERVQ), and 2223–2266 (RLRS…KQSA). Residues 2267–2280 (EEQAQAQAQAQAAA) show a composition bias toward low complexity. The segment covering 2281–2296 (EKLRKEAEQEAARRAQ) has biased composition (basic and acidic residues). Ser2639 carries the phosphoserine modification. Position 2644 is an N6-acetyllysine (Lys2644). Residues 2675–2728 (LREEQQRQQQQMEQEKQELMASMEEARRRQREAEEGVRRKQEELQHLEQQRQQQ) form a disordered region. Over residues 2687–2728 (EQEKQELMASMEEARRRQREAEEGVRRKQEELQHLEQQRQQQ) the composition is skewed to basic and acidic residues. Residues 2763–4691 (QAASTKALPN…SLGGPESAVA (1929 aa)) are globular 2. Residue Ser2781 is modified to Phosphoserine. At Tyr2788 the chain carries Phosphotyrosine. Plectin repeat units follow at residues 2795-2832 (QKVP…REDV), 2833-2870 (YRYL…PGTA), 2871-2908 (LILL…PELH), 2909-2946 (HKLL…RDHG), 2947-2984 (VRLL…EEMN), and 2988-3022 (SDPS…PETG). Ser2809 is subject to Phosphoserine. Thr2893 is subject to Phosphothreonine. Tyr3040 is subject to Phosphotyrosine. 2 positions are modified to N6-acetyllysine: Lys3060 and Lys3098. 6 Plectin repeats span residues 3123 to 3160 (ALVP…ADSV), 3161 to 3198 (RQAL…PEVA), 3199 to 3236 (VALL…PELH), 3237 to 3274 (EKLL…REQG), 3275 to 3312 (LRLL…KETN), and 3315 to 3350 (LTSP…QLTG). The segment covering 3312 to 3326 (NRALTSPRDDARVYH) has biased composition (basic and acidic residues). Positions 3312 to 3338 (NRALTSPRDDARVYHDPSTQEPVTYSQ) are disordered. Residues 3328 to 3338 (PSTQEPVTYSQ) show a composition bias toward polar residues. A Phosphotyrosine modification is found at Tyr3369. At Lys3427 the chain carries N6-acetyllysine. Plectin repeat units lie at residues 3492 to 3529 (RTLL…PSTA), 3530 to 3567 (TLLL…PELH), 3568 to 3605 (EKLL…RDHA), 3606 to 3643 (IRLL…EEMN), and 3647 to 3681 (ADPS…PETG). Thr3792 is modified (phosphothreonine). Tyr3797 carries the post-translational modification Phosphotyrosine. Plectin repeat units follow at residues 3827–3864 (WRYL…AEVA), 3865–3902 (RLLL…PELH), 3903–3940 (DRLL…AEEA), 3941–3978 (LRLL…KDTH), and 3982–4015 (SEPS…DPSG). The interval 3954-4291 (VDPRLGFHLP…KRRVVIVDPE (338 aa)) is required for interaction with type2 keratins, DES and VIM. Thr4037 carries the phosphothreonine modification. Position 4061 is a phosphoserine (Ser4061). Plectin repeat units follow at residues 4070 to 4107 (QKFL…PGTA), 4108 to 4145 (FELL…PEFK), 4146 to 4183 (DKLL…KDHG), 4184 to 4221 (IRLL…EEMN), 4225 to 4259 (TDPS…PQTG), and 4272 to 4312 (RKTS…HQTY). The interval 4257 to 4307 (QTGLCLLPLKEKKRERKTSSKSSVRKRRVVIVDPETGKEMSVYEAYRKGLI) is binding to intermediate filaments. Residues 4387 to 4420 (FRSRSSSVGSSSSYPISSAGPRTQLASWSDPTEE) are disordered. Residues Ser4389, Ser4391, Ser4392, Ser4393, Ser4396, Ser4397, Ser4398, and Ser4399 each carry the phosphoserine modification. Low complexity predominate over residues 4389–4404 (SRSSSVGSSSSYPISS). Tyr4400 carries the phosphotyrosine modification. Residues Ser4403 and Ser4413 each carry the phosphoserine modification. Positions 4406-4416 (GPRTQLASWSD) are enriched in polar residues. 5 Plectin repeats span residues 4415 to 4452 (SDPT…NITG), 4453 to 4490 (QRLL…KIMV), 4491 to 4528 (DRIN…YEAG), 4529 to 4566 (QRFL…ARTA), and 4567 to 4604 (QKLR…EGTG). A Phosphothreonine modification is found at Thr4418. Residues 4503-4572 (FEDPRTKTKM…ARTAQKLRDV (70 aa)) form a required for efficient interaction with KRT5 and KRT14 heterodimers region. Position 4546 is a phosphothreonine; by CDK1 (Thr4546). Residues Ser4614 and Ser4620 each carry the phosphoserine modification. Residues 4618–4678 (YYSPYSVSGS…SGYGRRYASG (61 aa)) are compositionally biased toward low complexity. The interval 4618-4691 (YYSPYSVSGS…SLGGPESAVA (74 aa)) is disordered. Tyr4622 bears the Phosphotyrosine mark. Phosphoserine is present on residues Ser4623, Ser4625, and Ser4629. At Thr4630 the chain carries Phosphothreonine. Residues 4632 to 4647 (GSRTGSRTGSRAGSRR) are 4 X 4 AA tandem repeats of G-S-R-X. A Phosphoserine modification is found at Ser4633. An omega-N-methylarginine mark is found at Arg4634 and Arg4647. Residues Ser4649 and Ser4682 each carry the phosphoserine modification.

It belongs to the plakin or cytolinker family. As to quaternary structure, homodimer or homotetramer. Interacts (via actin-binding domain) with SYNE3. Interacts (via calponin-homology (CH) 1 domain) with VIM (via rod region). Interacts (via N-terminus) with DST isoform 2 (via N-terminus). Interacts with FER. Interacts with TOR1A. Interacts with ANK3. Identified in complexes that contain VIM, EZR, AHNAK, BFSP1, BFSP2, ANK2, PLEC, PRX and spectrin. Interacts with KRT14, heterodimers consisting of KRT8 and KRT18, heterodimers consisting of KRT5 and KRT14, heterodimers consisting of KRT14 and KRT15, and heterodimers consisting of KRT1 and KRT10. Interacts with DES and VIM. Post-translationally, phosphorylated by CDK1; regulates dissociation from intermediate filaments during mitosis. Isoform PLEC-1A is phosphorylated on Ser-21. Isoform PLEC-1A is phosphorylated on Tyr-26. As to expression, detected in eye lens fiber cells (at protein level). Expressed at high levels in lung, brain, small intestine, muscle, heart and skin with lower levels found in kidney, liver, uterus, spleen and salivary gland.

It localises to the cytoplasm. It is found in the cytoskeleton. The protein resides in the cell junction. Its subcellular location is the hemidesmosome. The protein localises to the cell projection. It localises to the podosome. Interlinks intermediate filaments with microtubules and microfilaments and anchors intermediate filaments to desmosomes or hemidesmosomes. May be involved not only in the cross-linking and stabilization of cytoskeletal intermediate filaments network, but also in the regulation of their dynamics. This Mus musculus (Mouse) protein is Plectin (Plec).